Consider the following 342-residue polypeptide: Erlin-1 (342 aa).

The Cytoplasmic segment spans residues 1–6 (MAHVGA). Residues 7–23 (VVAAMAGLMAILLHSSI) traverse the membrane as a helical segment. Topologically, residues 24–342 (HKIEEGHLAV…ASKPKASEGH (319 aa)) are lumenal. A glycan (N-linked (GlcNAc...) asparagine) is linked at Asn106. The tract at residues 308 to 342 (SSASRPAAGESEQLESLSMRESLKKASKPKASEGH) is disordered.

It belongs to the band 7/mec-2 family.

Its subcellular location is the endoplasmic reticulum membrane. Functionally, mediates the endoplasmic reticulum-associated degradation (ERAD) of inositol 1,4,5-trisphosphate receptors (IP3Rs). Involved in regulation of cellular cholesterol homeostasis by regulation the SREBP signaling pathway. Binds cholesterol and may promote ER retention of the SCAP-SREBF complex. The sequence is that of Erlin-1 from Danio rerio (Zebrafish).